Reading from the N-terminus, the 455-residue chain is Anaerobic glycerol-3-phosphate dehydrogenase subunit B (455 aa).

Belongs to the anaerobic G-3-P dehydrogenase subunit B family. In terms of assembly, composed of a catalytic GlpA/B dimer and of membrane bound GlpC. Requires FMN as cofactor.

It carries out the reaction a quinone + sn-glycerol 3-phosphate = dihydroxyacetone phosphate + a quinol. The protein operates within polyol metabolism; glycerol degradation via glycerol kinase pathway; glycerone phosphate from sn-glycerol 3-phosphate (anaerobic route): step 1/1. Conversion of glycerol 3-phosphate to dihydroxyacetone. Uses fumarate or nitrate as electron acceptor. The polypeptide is Anaerobic glycerol-3-phosphate dehydrogenase subunit B (Aliivibrio fischeri (strain MJ11) (Vibrio fischeri)).